A 196-amino-acid polypeptide reads, in one-letter code: Lipoprotein signal peptidase (196 aa).

The interval 1-24 (MAEAERIIGMPENPDVDGTDEGGS) is disordered. Transmembrane regions (helical) follow at residues 40-60 (ILALLSVAVVAYLLDLGSKML), 92-112 (IGEAFTVIFTIIATGVIVVIF), and 118-138 (LYSLPWAIALGLLLGGALGNL). Residues Asp155 and Asp169 contribute to the active site. A helical membrane pass occupies residues 164-184 (VFNLADSAIVCGGILIVILSF).

This sequence belongs to the peptidase A8 family.

It localises to the cell membrane. It catalyses the reaction Release of signal peptides from bacterial membrane prolipoproteins. Hydrolyzes -Xaa-Yaa-Zaa-|-(S,diacylglyceryl)Cys-, in which Xaa is hydrophobic (preferably Leu), and Yaa (Ala or Ser) and Zaa (Gly or Ala) have small, neutral side chains.. It functions in the pathway protein modification; lipoprotein biosynthesis (signal peptide cleavage). This protein specifically catalyzes the removal of signal peptides from prolipoproteins. This Streptomyces griseus subsp. griseus (strain JCM 4626 / CBS 651.72 / NBRC 13350 / KCC S-0626 / ISP 5235) protein is Lipoprotein signal peptidase.